The following is an 84-amino-acid chain: Small ribosomal subunit protein bS18 (84 aa).

It belongs to the bacterial ribosomal protein bS18 family. As to quaternary structure, part of the 30S ribosomal subunit. Forms a tight heterodimer with protein bS6.

Functionally, binds as a heterodimer with protein bS6 to the central domain of the 16S rRNA, where it helps stabilize the platform of the 30S subunit. This Maricaulis maris (strain MCS10) (Caulobacter maris) protein is Small ribosomal subunit protein bS18.